Consider the following 475-residue polypeptide: Doublecortin domain-containing protein 2 (475 aa).

Doublecortin domains are found at residues 17-100 (KSVL…LNYL) and 139-221 (CTIF…LPYS). A disordered region spans residues 234-475 (YGQKASSLPP…ESNKASSAVA (242 aa)). Over residues 252-272 (GSGNYRQSKSTIGSSDNSSPQ) the composition is skewed to polar residues. A Phosphoserine modification is found at S270. Positions 353 to 365 (EKTSKDANQKDDF) are enriched in basic and acidic residues. Acidic residues predominate over residues 407-419 (TDEENGEELDQVT). Residues 455–475 (TVTSPQENEGNESNKASSAVA) show a composition bias toward polar residues.

Interacts with DVL1, DVL2 and DVL3. Expressed in hair cells of the inner ear.

It is found in the cell projection. Its subcellular location is the cilium. The protein localises to the cytoplasm. It localises to the cytoskeleton. The protein resides in the cilium axoneme. It is found in the kinocilium. Functionally, protein that plays a role in the inhibition of canonical Wnt signaling pathway. May be involved in neuronal migration during development of the cerebral neocortex. Involved in the control of ciliogenesis and ciliary length. The chain is Doublecortin domain-containing protein 2 (Dcdc2) from Rattus norvegicus (Rat).